The sequence spans 89 residues: Barrier-to-autointegration factor 1 (89 aa).

The protein belongs to the BAF family. Interacts with emr-1 and lem-2. Interacts with lem-4l, leading to decreased phosphorylation by VRK1 and promoting dephosphorylation by protein phosphatase 2A (PP2A). In terms of processing, phosphorylated by vrk-1. Phosphorylation by vrk-1 in mitosis is essential to achieve correct timing of recruitment of nuclear envelope components during nuclear envelope assembly. Dephosphorylated by protein phosphatase 2A (PP2A) following interaction with lem-4l during mitotic exit, leading to mitotic nuclear envelope reassembly.

Its subcellular location is the nucleus. Its function is as follows. DNA-binding protein which plays an essential role in nuclear envelope formation. Required for normal chromosome segregation during mitosis. Associates with the nuclear lamina via its interaction with LEM domain containing proteins emr-1 and lem-2. In association with lem-3, plays a role in radiation-induced DNA damage repair response. This is Barrier-to-autointegration factor 1 (baf-1) from Caenorhabditis elegans.